Here is a 199-residue protein sequence, read N- to C-terminus: FMN-dependent NADH:quinone oxidoreductase (199 aa).

FMN is bound by residues Ser9 and 95–98; that span reads MYNF.

This sequence belongs to the azoreductase type 1 family. In terms of assembly, homodimer. Requires FMN as cofactor.

The catalysed reaction is 2 a quinone + NADH + H(+) = 2 a 1,4-benzosemiquinone + NAD(+). The enzyme catalyses N,N-dimethyl-1,4-phenylenediamine + anthranilate + 2 NAD(+) = 2-(4-dimethylaminophenyl)diazenylbenzoate + 2 NADH + 2 H(+). Its function is as follows. Quinone reductase that provides resistance to thiol-specific stress caused by electrophilic quinones. Functionally, also exhibits azoreductase activity. Catalyzes the reductive cleavage of the azo bond in aromatic azo compounds to the corresponding amines. The chain is FMN-dependent NADH:quinone oxidoreductase from Dechloromonas aromatica (strain RCB).